Here is a 661-residue protein sequence, read N- to C-terminus: Fusaric acid cluster transcription factor FUB12 (661 aa).

A DNA-binding region (zn(2)-C6 fungal-type) is located at residues cysteine 17 to cysteine 48. Disordered stretches follow at residues arginine 56–glutamine 132 and serine 151–aspartate 184. Over residues proline 73–serine 98 the composition is skewed to polar residues. Residues serine 99 to histidine 109 are compositionally biased toward basic and acidic residues. Positions alanine 110–asparagine 119 are enriched in polar residues. The segment covering aspartate 120–proline 129 has biased composition (basic and acidic residues).

It localises to the nucleus. Its function is as follows. Transcription factor that is involved in the formation of the two Fusaric acid derivatives, dehydrofusaric acid and fusarinolic acid, serving as a detoxification mechanism. This chain is Fusaric acid cluster transcription factor FUB12, found in Gibberella moniliformis (strain M3125 / FGSC 7600) (Maize ear and stalk rot fungus).